The following is a 461-amino-acid chain: Ribosomal protein uS12 methylthiotransferase RimO (461 aa).

In terms of domain architecture, MTTase N-terminal spans 9-124; that stretch reads PRIGMVSLGC…VMDAVHLNLP (116 aa). Residues C18, C54, C83, C159, C163, and C166 each coordinate [4Fe-4S] cluster. In terms of domain architecture, Radical SAM core spans 145 to 387; that stretch reads LTPRHYAYLK…AVAEAVSSQK (243 aa). The TRAM domain occupies 389–461; the sequence is QQRVGATMQV…QGHDLIAVPV (73 aa).

Belongs to the methylthiotransferase family. RimO subfamily. It depends on [4Fe-4S] cluster as a cofactor.

The protein localises to the cytoplasm. The catalysed reaction is L-aspartate(89)-[ribosomal protein uS12]-hydrogen + (sulfur carrier)-SH + AH2 + 2 S-adenosyl-L-methionine = 3-methylsulfanyl-L-aspartate(89)-[ribosomal protein uS12]-hydrogen + (sulfur carrier)-H + 5'-deoxyadenosine + L-methionine + A + S-adenosyl-L-homocysteine + 2 H(+). Its function is as follows. Catalyzes the methylthiolation of an aspartic acid residue of ribosomal protein uS12. The protein is Ribosomal protein uS12 methylthiotransferase RimO of Polaromonas naphthalenivorans (strain CJ2).